The chain runs to 148 residues: MAQNNKELEKLAYEYQVLQAQAQILAQNLELLNLAKAEVQTVRETLENLKKIEEEKPEILVPIGAGSFLKGVIVDKNNAIVSVGSGYAVERSIDEAISFLEKRLKEYDEAIKKTQGALAELEKRIGEVARKAQEVQQKQSMTSFKVKK.

This sequence belongs to the prefoldin subunit alpha family. In terms of assembly, heterohexamer of two alpha and four beta subunits.

It is found in the cytoplasm. In terms of biological role, molecular chaperone capable of stabilizing a range of proteins. Seems to fulfill an ATP-independent, HSP70-like function in archaeal de novo protein folding. The polypeptide is Prefoldin subunit alpha (pfdA) (Pyrococcus horikoshii (strain ATCC 700860 / DSM 12428 / JCM 9974 / NBRC 100139 / OT-3)).